A 359-amino-acid polypeptide reads, in one-letter code: Peptide chain release factor 1 (359 aa).

Position 235 is an N5-methylglutamine (Gln235). Positions 285 to 305 (KRDSEISQMRKSQIGSGDRSE) are disordered. Residues 290-299 (ISQMRKSQIG) show a composition bias toward polar residues.

Belongs to the prokaryotic/mitochondrial release factor family. Post-translationally, methylated by PrmC. Methylation increases the termination efficiency of RF1.

It is found in the cytoplasm. Its function is as follows. Peptide chain release factor 1 directs the termination of translation in response to the peptide chain termination codons UAG and UAA. The protein is Peptide chain release factor 1 of Ehrlichia canis (strain Jake).